A 192-amino-acid chain; its full sequence is Superoxide dismutase [Fe] (192 aa).

Positions 27, 74, 157, and 161 each coordinate Fe cation.

It belongs to the iron/manganese superoxide dismutase family. In terms of assembly, homodimer. It depends on Fe cation as a cofactor.

It catalyses the reaction 2 superoxide + 2 H(+) = H2O2 + O2. Its function is as follows. Destroys superoxide anion radicals which are normally produced within the cells and which are toxic to biological systems. This Legionella pneumophila subsp. pneumophila (strain Philadelphia 1 / ATCC 33152 / DSM 7513) protein is Superoxide dismutase [Fe] (sodB).